Here is a 150-residue protein sequence, read N- to C-terminus: Putative biopolymer transport protein ExbB-like 2 (150 aa).

Helical transmembrane passes span 5–25, 63–83, and 97–117; these read VDYG…AIAI, APYI…MDLG, and LALA…AIVI.

The protein belongs to the ExbB/TolQ family.

It is found in the cell inner membrane. This Helicobacter pylori (strain ATCC 700392 / 26695) (Campylobacter pylori) protein is Putative biopolymer transport protein ExbB-like 2.